The chain runs to 147 residues: Lysozyme C-1 (147 aa).

Positions 1 to 18 (MKALIILGLLCLSVAVQG) are cleaved as a signal peptide. A C-type lysozyme domain is found at 19 to 147 (KVFERCELAR…VSSYVEGCSL (129 aa)). 4 disulfides stabilise this stretch: Cys-24–Cys-145, Cys-48–Cys-133, Cys-83–Cys-99, and Cys-95–Cys-113. Residues Glu-53 and Asp-71 contribute to the active site.

Belongs to the glycosyl hydrolase 22 family. Monomer. Expressed in stomach.

It localises to the secreted. It catalyses the reaction Hydrolysis of (1-&gt;4)-beta-linkages between N-acetylmuramic acid and N-acetyl-D-glucosamine residues in a peptidoglycan and between N-acetyl-D-glucosamine residues in chitodextrins.. Lysozymes have primarily a bacteriolytic function; those in tissues and body fluids are associated with the monocyte-macrophage system and enhance the activity of immunoagents. In Ovis aries (Sheep), this protein is Lysozyme C-1.